The sequence spans 110 residues: Large ribosomal subunit protein mL60 (110 aa).

Belongs to the mitochondrion-specific ribosomal protein mL60 family. In terms of assembly, component of the mitochondrial large ribosomal subunit (mt-LSU). Mature N.crassa 74S mitochondrial ribosomes consist of a small (37S) and a large (54S) subunit. The 37S small subunit contains a 16S ribosomal RNA (16S mt-rRNA) and 32 different proteins. The 54S large subunit contains a 23S rRNA (23S mt-rRNA) and 42 different proteins.

The protein resides in the mitochondrion. Its function is as follows. Component of the mitochondrial ribosome (mitoribosome), a dedicated translation machinery responsible for the synthesis of mitochondrial genome-encoded proteins, including at least some of the essential transmembrane subunits of the mitochondrial respiratory chain. The mitoribosomes are attached to the mitochondrial inner membrane and translation products are cotranslationally integrated into the membrane. The polypeptide is Large ribosomal subunit protein mL60 (mrpl31) (Neurospora crassa (strain ATCC 24698 / 74-OR23-1A / CBS 708.71 / DSM 1257 / FGSC 987)).